A 288-amino-acid chain; its full sequence is MALFSKKDKYIRITPNNSLKSSVSRNIPEVPDELFAKCPACKHMIYQKDLGPAKICPTCSYNFRISAQERLTLTVDEGSFQELFTDIETKDPLRFPGYQAKLQKARQATGLHEAVLTGTALVKGQRLALAIMDSHFIMASMGTVVGEKITRLFELAINERLPVIIFTASGGARMQEGIMSLMQMAKVSAAVKRHSNAGLFYLTILTDPTTGGVTASFAMEGDMIIAEPQSLVGFAGRRVIETTVRENLPDDFQKAEFLKEHGFVDAIVKRTDLRDRIAHLVAFHGGVS.

One can recognise a CoA carboxyltransferase N-terminal domain in the interval 34–288 (LFAKCPACKH…HLVAFHGGVS (255 aa)). Residues Cys-38, Cys-41, Cys-56, and Cys-59 each contribute to the Zn(2+) site. The C4-type zinc finger occupies 38–59 (CPACKHMIYQKDLGPAKICPTC).

The protein belongs to the AccD/PCCB family. Acetyl-CoA carboxylase is a heterohexamer composed of biotin carboxyl carrier protein (AccB), biotin carboxylase (AccC) and two subunits each of ACCase subunit alpha (AccA) and ACCase subunit beta (AccD). Zn(2+) is required as a cofactor.

Its subcellular location is the cytoplasm. The catalysed reaction is N(6)-carboxybiotinyl-L-lysyl-[protein] + acetyl-CoA = N(6)-biotinyl-L-lysyl-[protein] + malonyl-CoA. Its pathway is lipid metabolism; malonyl-CoA biosynthesis; malonyl-CoA from acetyl-CoA: step 1/1. In terms of biological role, component of the acetyl coenzyme A carboxylase (ACC) complex. Biotin carboxylase (BC) catalyzes the carboxylation of biotin on its carrier protein (BCCP) and then the CO(2) group is transferred by the transcarboxylase to acetyl-CoA to form malonyl-CoA. This is Acetyl-coenzyme A carboxylase carboxyl transferase subunit beta from Streptococcus equi subsp. zooepidemicus (strain MGCS10565).